We begin with the raw amino-acid sequence, 1021 residues long: Caspase recruitment domain-containing protein 10 (1021 aa).

A disordered region spans residues 1–24 (MQGRADAGEADEEAGAGSGSEAEE). A Phosphoserine modification is found at Ser-18. One can recognise a CARD domain in the interval 23–115 (EEDALWERIE…EHFTLLTGQE (93 aa)). Positions 138-450 (TEVRRLREAR…LEAQLQRTQG (313 aa)) form a coiled coil. Disordered regions lie at residues 475 to 544 (EFPS…MSDI), 597 to 616 (SPPA…PGLG), and 790 to 809 (LVRP…QLPA). Composition is skewed to basic and acidic residues over residues 495 to 508 (HTSE…KEIN) and 525 to 535 (RQREEDPEPPK).

In terms of assembly, CARD10 and BCL10 bind to each other by CARD-CARD interaction. They both participate in a complex with MALT1, where MALT1 binds to BCL10. Interacts with TMEM43; this interaction is essential for EGFR-mediated NF-kappa-B activation. In terms of tissue distribution, highly expressed in kidney, heart followed by brain, lung, liver, skeletal muscle and testis.

In terms of biological role, scaffold protein that plays an important role in mediating the activation of NF-kappa-B via BCL10 or EGFR. In Mus musculus (Mouse), this protein is Caspase recruitment domain-containing protein 10 (Card10).